A 1178-amino-acid chain; its full sequence is Mitosis inhibitor protein kinase SWE1 (1178 aa).

Polar residues predominate over residues 1–35; the sequence is MDSNPCQDVSGDTSSTPMANNNPTNDSTISSQNHS. Disordered regions lie at residues 1–61, 188–209, 288–336, 378–434, 451–473, 524–543, 584–606, and 721–754; these read MDSN…HSQQ, NSQITYNSHVRKPSEEDTSSSM, SNNQ…SKGF, PTHT…SSNI, NHARKSSNPIPYPPTEPLPTNIS, KNSISGSSDRKLPPETPIKR, QRFPGSVNPNTTTNNNNTQQHHD, and KREISEPPSTPINMSFAKNSFKKPMNNAERGDDP. Positions 37–55 are enriched in basic residues; that stretch reads IGLRKHQQQHYHQHSHSQM. Polar residues predominate over residues 299 to 308; the sequence is VSQSPSPSSK. Over residues 388–413 the composition is skewed to low complexity; sequence SSLNPPSSSTSNSTTAAITSTSPPAN. The span at 591–601 shows a compositional bias: low complexity; that stretch reads NPNTTTNNNNT. The 364-residue stretch at 791–1154 folds into the Protein kinase domain; the sequence is MKNIKYIGSG…ACNILEMPEC (364 aa). Residues 797–805 and lysine 818 contribute to the ATP site; that span reads IGSGAFSIA. The active-site Proton acceptor is the aspartate 929. Positions 934 and 947 each coordinate Mg(2+). Residues 1034–1068 are disordered; it reads HNPNTNSNISGSGSRSGSGSTGGNGSAGDGSTNST. Over residues 1037–1046 the composition is skewed to low complexity; it reads NTNSNISGSG. Over residues 1047 to 1061 the composition is skewed to gly residues; that stretch reads SRSGSGSTGGNGSAG.

The protein belongs to the protein kinase superfamily. Ser/Thr protein kinase family. WEE1 subfamily. In terms of processing, phosphorylated.

It localises to the bud neck. Its subcellular location is the nucleus. It catalyses the reaction L-seryl-[protein] + ATP = O-phospho-L-seryl-[protein] + ADP + H(+). The catalysed reaction is L-threonyl-[protein] + ATP = O-phospho-L-threonyl-[protein] + ADP + H(+). Functionally, protein kinase that acts as a negative regulator of entry into mitosis (G2 to M transition) by phosphorylating and inhibiting the mitosis-promoting cyclin B-bound CDC28 at 'Tyr-18'. SWE1-mediated inhibition of CDC28 acts in a cell size or morphogenesis checkpoint to delay mitosis in response to defects in growth, actin organization or bud formation. Plays an important role in filamentous growth. The chain is Mitosis inhibitor protein kinase SWE1 (SWE1) from Candida albicans (strain SC5314 / ATCC MYA-2876) (Yeast).